Here is a 461-residue protein sequence, read N- to C-terminus: Trigger factor (461 aa).

One can recognise a PPIase FKBP-type domain in the interval 169–256 (GDTAVIDFAG…LKDLKIKELP (88 aa)). Residues 432–461 (PGEAIEPGSGEDAPPEVAAGATEPEAQPNS) form a disordered region.

This sequence belongs to the FKBP-type PPIase family. Tig subfamily.

Its subcellular location is the cytoplasm. It catalyses the reaction [protein]-peptidylproline (omega=180) = [protein]-peptidylproline (omega=0). Its function is as follows. Involved in protein export. Acts as a chaperone by maintaining the newly synthesized protein in an open conformation. Functions as a peptidyl-prolyl cis-trans isomerase. In Gloeobacter violaceus (strain ATCC 29082 / PCC 7421), this protein is Trigger factor.